The sequence spans 136 residues: Large ribosomal subunit protein uL16 (136 aa).

The protein belongs to the universal ribosomal protein uL16 family. Part of the 50S ribosomal subunit.

In terms of biological role, binds 23S rRNA and is also seen to make contacts with the A and possibly P site tRNAs. This chain is Large ribosomal subunit protein uL16, found in Buchnera aphidicola subsp. Baizongia pistaciae (strain Bp).